Here is a 346-residue protein sequence, read N- to C-terminus: Dimethylallyltranstransferase (346 aa).

Isopentenyl diphosphate is bound by residues Lys-96, Arg-99, and His-128. Mg(2+) is bound by residues Asp-135 and Asp-141. Arg-147 contributes to the isopentenyl diphosphate binding site.

It belongs to the FPP/GGPP synthase family. It depends on Mg(2+) as a cofactor.

It catalyses the reaction isopentenyl diphosphate + dimethylallyl diphosphate = (2E)-geranyl diphosphate + diphosphate. Its pathway is isoprenoid biosynthesis; geranyl diphosphate biosynthesis; geranyl diphosphate from dimethylallyl diphosphate and isopentenyl diphosphate: step 1/1. Prenyltransferase involved in the biosynthesis of ambiguines, a family of hapalindole-type alkaloids. Catalyzes the addition of isopentenyl diphosphate (IPP) onto dimethylallyl diphosphate (DMAPP) to form geranyl pyrophosphate (GPP). Cannot use farnesyl diphosphate (FPP) or geranylgeranyl diphosphate (GGPP). The protein is Dimethylallyltranstransferase of Fischerella ambigua (strain UTEX 1903).